Consider the following 287-residue polypeptide: Protease HtpX (287 aa).

2 consecutive transmembrane segments (helical) span residues 4–24 (IFLL…VMSI) and 33–53 (GGLL…SLAI). H139 is a Zn(2+) binding site. E140 is a catalytic residue. H143 is a Zn(2+) binding site. Helical transmembrane passes span 154-174 (LIQG…ASII) and 195-215 (AVVF…VAYF). E220 lines the Zn(2+) pocket.

The protein belongs to the peptidase M48B family. Requires Zn(2+) as cofactor.

It is found in the cell inner membrane. The polypeptide is Protease HtpX (Shewanella loihica (strain ATCC BAA-1088 / PV-4)).